The primary structure comprises 1063 residues: Lysine-specific demethylase phf2 (1063 aa).

A PHD-type zinc finger spans residues 5–56 (PVYCICRLPYDVTQFMIECDACKDWFHGSCVGVDEDEAPDIDIYHCPNCEKT). A JmjC domain is found at 197-353 (FSDARMANIV…MQMRAYEVEK (157 aa)). T246 is a 2-oxoglutarate binding site. Fe cation contacts are provided by H249 and E251. 2-oxoglutarate-binding residues include Y259 and K266. Residue N321 coordinates Fe cation. Disordered regions lie at residues 448 to 546 (VSDS…LAAL), 704 to 761 (NIKE…SAGI), 773 to 864 (GIDY…DMFD), and 879 to 1045 (YVYP…MATA). The segment covering 460 to 477 (SEPSNSKPPAEEPPSALS) has biased composition (low complexity). Composition is skewed to basic and acidic residues over residues 513–540 (PPKE…EKKP) and 723–745 (KSPD…DVKG). Residues 746–755 (RNSKVSKKKG) are compositionally biased toward basic residues. The segment covering 776 to 791 (YSNNSQPPASPSTQEA) has biased composition (polar residues). Low complexity predominate over residues 813-833 (SNSQAKNNSHSSAASKKPSGA). A compositionally biased stretch (basic residues) spans 842 to 852 (RPAKRLPKKTQ). Basic and acidic residues predominate over residues 920-929 (RQERPAREGA). Residues 953–964 (IKKKKKSAKKKP) show a composition bias toward basic residues. Over residues 965-975 (IVAEESHKLSH) the composition is skewed to basic and acidic residues. Low complexity-rich tracts occupy residues 976-988 (DSSS…DSES) and 1021-1031 (SSSSSSQNASS). Residue S1021 is modified to Phosphoserine; by PKA.

It belongs to the JHDM1 histone demethylase family. JHDM1D subfamily.

The protein resides in the nucleus. It is found in the nucleolus. The protein localises to the chromosome. It localises to the centromere. Its subcellular location is the kinetochore. Lysine demethylase that demethylates both histones and non-histone proteins. Mediates demethylation of dimethylated 'Lys-9' of histone H3 (H3K9me2). Recruited to trimethylated 'Lys-4' of histone H3 (H3K4me3) at rDNA promoters and promotes expression of rDNA. The polypeptide is Lysine-specific demethylase phf2 (phf2) (Danio rerio (Zebrafish)).